We begin with the raw amino-acid sequence, 196 residues long: Carnitine operon protein CaiE (196 aa).

Residues 173-196 (TQPLRQMEENRPRLQGTTDVTPKR) are disordered. Positions 187-196 (QGTTDVTPKR) are enriched in polar residues.

Belongs to the transferase hexapeptide repeat family.

Its pathway is amine and polyamine metabolism; carnitine metabolism. Its function is as follows. Overproduction of CaiE stimulates the activity of CaiB and CaiD. This Escherichia coli O157:H7 protein is Carnitine operon protein CaiE.